The primary structure comprises 124 residues: Small ribosomal subunit protein uS12 (124 aa).

The residue at position 89 (aspartate 89) is a 3-methylthioaspartic acid.

Belongs to the universal ribosomal protein uS12 family. In terms of assembly, part of the 30S ribosomal subunit. Contacts proteins S8 and S17. May interact with IF1 in the 30S initiation complex.

Functionally, with S4 and S5 plays an important role in translational accuracy. Interacts with and stabilizes bases of the 16S rRNA that are involved in tRNA selection in the A site and with the mRNA backbone. Located at the interface of the 30S and 50S subunits, it traverses the body of the 30S subunit contacting proteins on the other side and probably holding the rRNA structure together. The combined cluster of proteins S8, S12 and S17 appears to hold together the shoulder and platform of the 30S subunit. The sequence is that of Small ribosomal subunit protein uS12 from Shewanella denitrificans (strain OS217 / ATCC BAA-1090 / DSM 15013).